We begin with the raw amino-acid sequence, 225 residues long: Rho GDP-dissociation inhibitor 3 (225 aa).

The protein belongs to the Rho GDI family. As to expression, detected only in brain, lung, kidney and testis.

Its subcellular location is the cytoplasm. Its function is as follows. Inhibits GDP/GTP exchange reaction of RhoB. Interacts specifically with the GDP- and GTP-bound forms of post-translationally processed Rhob and Rhog proteins, both of which show a growth-regulated expression in mammalian cells. Stimulates the release of the GDP-bound but not the GTP-bound RhoB protein. Also inhibits the GDP/GTP exchange of RhoB but shows less ability to inhibit the dissociation of prebound GTP. This is Rho GDP-dissociation inhibitor 3 (Arhgdig) from Mus musculus (Mouse).